The following is a 191-amino-acid chain: Superoxide dismutase [Mn/Fe] (191 aa).

4 residues coordinate Fe(3+): His-27, His-74, Asp-157, and His-161. Residues His-27, His-74, Asp-157, and His-161 each coordinate Mn(2+).

The protein belongs to the iron/manganese superoxide dismutase family. Homodimer. It depends on Mn(2+) as a cofactor. Requires Fe(3+) as cofactor.

It carries out the reaction 2 superoxide + 2 H(+) = H2O2 + O2. With respect to regulation, inhibited by hydrogen peroxide. In terms of biological role, destroys superoxide anion radicals which are normally produced within the cells and which are toxic to biological systems. Catalyzes the dismutation of superoxide anion radicals into O2 and H2O2 by successive reduction and oxidation of the transition metal ion at the active site. In Porphyromonas gingivalis (strain ATCC BAA-308 / W83), this protein is Superoxide dismutase [Mn/Fe] (sodB).